We begin with the raw amino-acid sequence, 513 residues long: ATP synthase subunit alpha (513 aa).

169 to 176 (GDRQTGKT) provides a ligand contact to ATP.

Belongs to the ATPase alpha/beta chains family. As to quaternary structure, F-type ATPases have 2 components, CF(1) - the catalytic core - and CF(0) - the membrane proton channel. CF(1) has five subunits: alpha(3), beta(3), gamma(1), delta(1), epsilon(1). CF(0) has three main subunits: a(1), b(2) and c(9-12). The alpha and beta chains form an alternating ring which encloses part of the gamma chain. CF(1) is attached to CF(0) by a central stalk formed by the gamma and epsilon chains, while a peripheral stalk is formed by the delta and b chains.

It is found in the cell inner membrane. It catalyses the reaction ATP + H2O + 4 H(+)(in) = ADP + phosphate + 5 H(+)(out). Functionally, produces ATP from ADP in the presence of a proton gradient across the membrane. The alpha chain is a regulatory subunit. This Shewanella loihica (strain ATCC BAA-1088 / PV-4) protein is ATP synthase subunit alpha.